A 301-amino-acid chain; its full sequence is Lipoyl synthase (301 aa).

[4Fe-4S] cluster is bound by residues cysteine 50, cysteine 55, cysteine 61, cysteine 76, cysteine 80, cysteine 83, and serine 289. Residues tryptophan 62–arginine 278 enclose the Radical SAM core domain.

It belongs to the radical SAM superfamily. Lipoyl synthase family. It depends on [4Fe-4S] cluster as a cofactor.

The protein resides in the cytoplasm. The catalysed reaction is [[Fe-S] cluster scaffold protein carrying a second [4Fe-4S](2+) cluster] + N(6)-octanoyl-L-lysyl-[protein] + 2 oxidized [2Fe-2S]-[ferredoxin] + 2 S-adenosyl-L-methionine + 4 H(+) = [[Fe-S] cluster scaffold protein] + N(6)-[(R)-dihydrolipoyl]-L-lysyl-[protein] + 4 Fe(3+) + 2 hydrogen sulfide + 2 5'-deoxyadenosine + 2 L-methionine + 2 reduced [2Fe-2S]-[ferredoxin]. Its pathway is protein modification; protein lipoylation via endogenous pathway; protein N(6)-(lipoyl)lysine from octanoyl-[acyl-carrier-protein]: step 2/2. Functionally, catalyzes the radical-mediated insertion of two sulfur atoms into the C-6 and C-8 positions of the octanoyl moiety bound to the lipoyl domains of lipoate-dependent enzymes, thereby converting the octanoylated domains into lipoylated derivatives. This chain is Lipoyl synthase, found in Roseiflexus sp. (strain RS-1).